The following is a 164-amino-acid chain: Transcription elongation factor GreA (164 aa).

The stretch at 12 to 38 (RRLERELERLKKERPGVILAIKEAREE) forms a coiled coil.

Belongs to the GreA/GreB family.

Necessary for efficient RNA polymerase transcription elongation past template-encoded arresting sites. The arresting sites in DNA have the property of trapping a certain fraction of elongating RNA polymerases that pass through, resulting in locked ternary complexes. Cleavage of the nascent transcript by cleavage factors such as GreA or GreB allows the resumption of elongation from the new 3'terminus. GreA releases sequences of 2 to 3 nucleotides. The sequence is that of Transcription elongation factor GreA from Solidesulfovibrio magneticus (strain ATCC 700980 / DSM 13731 / RS-1) (Desulfovibrio magneticus).